A 227-amino-acid polypeptide reads, in one-letter code: Sensory transduction protein RegX3 (227 aa).

The 114-residue stretch at 3–116 (SVLIVEDEES…ELIARIRAVL (114 aa)) folds into the Response regulatory domain. Asp52 is subject to 4-aspartylphosphate. The segment at residues 128-227 (DGVLESGPVR…VRGLGYKLEG (100 aa)) is a DNA-binding region (ompR/PhoB-type).

In terms of processing, phosphorylated by SenX3.

In terms of biological role, member of the two-component regulatory system SenX3/RegX3. Specifically binds to the promoter region of the senX3-regX3 operon. This Mycobacterium bovis (strain ATCC BAA-935 / AF2122/97) protein is Sensory transduction protein RegX3.